A 70-amino-acid chain; its full sequence is MMFRVTSVGCLLLVIVFLNLVVPTSACRAEGTYCENDSQCCLNECCWGGCGHPCRHPGKRSKLQEFFRQR.

Residues 1–26 (MMFRVTSVGCLLLVIVFLNLVVPTSA) form the signal peptide. 4 disulfides stabilise this stretch: C27/C41, C34/C46, C40/C50, and C45/C54. 4-carboxyglutamate is present on residues E30, E35, and E44. Position 53 is a 4-hydroxyproline (P53). A Proline amide modification is found at P57. The propeptide occupies 61 to 70 (SKLQEFFRQR).

It belongs to the conotoxin I2 superfamily. In terms of tissue distribution, expressed by the venom duct.

Its subcellular location is the secreted. Modulator of potassium channels, specifically up-modulates the calcium and voltage-gated BK channels, has no effect on single channel conductance, but increases the open probability of BK channels. In Conus striolatus (Cone snail), this protein is Kappa-conotoxin-like Sx11.2.